The following is a 694-amino-acid chain: Ribonuclease R (694 aa).

Residues 204 to 525 (RKDLRDLLCF…IVHRLLFHPL (322 aa)) enclose the RNB domain. An S1 motif domain is found at 571–648 (ATLYKAFIIT…LTQSIEWTLV (78 aa)). The segment at 652–694 (TKAKAKRTSKKKKTESVTTKEKKKSPAKKKKGATKTKKGSGKN) is disordered. Basic residues-rich tracts occupy residues 654–664 (AKAKRTSKKKK) and 672–694 (EKKK…SGKN).

Belongs to the RNR ribonuclease family. RNase R subfamily.

Its subcellular location is the cytoplasm. The enzyme catalyses Exonucleolytic cleavage in the 3'- to 5'-direction to yield nucleoside 5'-phosphates.. Its function is as follows. 3'-5' exoribonuclease that releases 5'-nucleoside monophosphates and is involved in maturation of structured RNAs. The protein is Ribonuclease R of Chlamydia trachomatis serovar D (strain ATCC VR-885 / DSM 19411 / UW-3/Cx).